Reading from the N-terminus, the 304-residue chain is Thyroxine 5-deiodinase (304 aa).

A disordered region spans residues 1-23; that stretch reads MPRQATSRLVVGEGEGSQGASGP. The Cytoplasmic portion of the chain corresponds to 1-44; the sequence is MPRQATSRLVVGEGEGSQGASGPAATMLRSLLLHSLRLCAQTAS. Residues 45–67 traverse the membrane as a helical; Signal-anchor for type II membrane protein segment; that stretch reads CLVLFPRFLGTAFMLWLLDFLCI. Residues 68–304 lie on the Extracellular side of the membrane; sequence RKHFLGRRRR…QLHGARPRRV (237 aa). Positions 78-99 are disordered; that stretch reads GQPEPEVELNSEGEEVPPDDPP. The span at 82 to 95 shows a compositional bias: acidic residues; that stretch reads PEVELNSEGEEVPP. Sec-170 is an active-site residue. Sec-170 is a non-standard amino acid (selenocysteine).

Belongs to the iodothyronine deiodinase family. In terms of assembly, monomer. Homodimer. May undergo minor heretodimerization with DIO1 and DIO2. In terms of tissue distribution, expressed in placenta and several fetal tissues.

It is found in the cell membrane. Its subcellular location is the endosome membrane. It catalyses the reaction 3,3',5'-triiodo-L-thyronine + iodide + A + H(+) = L-thyroxine + AH2. It carries out the reaction 3,3'-diiodo-L-thyronine + iodide + A + H(+) = 3,3',5-triiodo-L-thyronine + AH2. The enzyme catalyses 3-iodo-L-thyronine + iodide + A + H(+) = 3,5-diiodo-L-thyronine + AH2. The catalysed reaction is L-thyronine + iodide + A + H(+) = 3-iodo-L-thyronine + AH2. It catalyses the reaction 3',5'-diiodo-L-thyronine + iodide + A + H(+) = 3,3',5'-triiodo-L-thyronine + AH2. It carries out the reaction 3'-iodo-L-thyronine + iodide + A + H(+) = 3,3'-diiodo-L-thyronine + AH2. The enzyme catalyses 3,3',5'-triiodothyronamine + iodide + A + H(+) = 3,3',5,5'-tetraiodothyronamine + AH2. The catalysed reaction is 3',5'-diiodothyronamine + iodide + A + H(+) = 3,3',5'-triiodothyronamine + AH2. It catalyses the reaction 3,3'-diiodothyronamine + iodide + A + H(+) = 3,3',5-triiodothyronamine + AH2. It carries out the reaction 3-iodothyronamine + iodide + A + H(+) = 3,5-diiodothyronamine + AH2. The enzyme catalyses 3'-iodothyronamine + iodide + A + H(+) = 3,3'-diiodothyronamine + AH2. The catalysed reaction is thyronamine + iodide + A + H(+) = 3-iodothyronamine + AH2. In terms of biological role, plays a crucial role in the metabolism of thyroid hormones (TH) and has specific roles in TH activation and inactivation by deiodination. Catalyzes the deiodination of L-thyroxine (T4) to 3,3',5'-triiodothyronine (rT3), 3,5,3'-triiodothyronine (T3) to 3,3'-diiodothyronine (3,3'-T2), 3,5-diiodothyronine (3,5-T2) to 3-monoiodothyronine (3-T1), rT3 to 3',5'-diiodothyronine (3',5'-T2) and 3,3'-T2 to 3'-monoiodothyronine (3'-T1) via inner-ring deiodination (IRD). Catalyzes the deiodination of 3-T1 to L-thyronine (T0) via outer-ring deiodination (ORD). Catalyzes the tyrosyl ring deiodinations of 3,3',5,5'-tetraiodothyronamine, 3,3',5'-triiodothyronamine, 3,5,3'-triiodothyronamine, 3,5-diiodothyronamine, 3,3'-diiodothyronamine and 3-iodothyronamine. This Homo sapiens (Human) protein is Thyroxine 5-deiodinase (DIO3).